The following is a 1363-amino-acid chain: Homeobox protein 13 (1363 aa).

The stretch at 15 to 73 (FVMEQIQQQQQQQQQQQQQQQQQQQQQQQQQQQQLQQQQQQQQQQQQQQQQQQQQQQQN) forms a coiled coil. 9 disordered regions span residues 66–96 (QQQQ…STVP), 120–177 (SQHA…INGS), 308–437 (INGT…YHGG), 621–731 (LNSP…QHQQ), 765–818 (HHHH…PQHS), 857–911 (SINS…SNSI), 1001–1137 (QNYN…TLIN), 1166–1202 (NFIN…KRMR), and 1270–1341 (ISFG…TLIS). The span at 73-96 (NPKMNNQPNETRLPSPPLLNSTVP) shows a compositional bias: polar residues. Over residues 132–147 (SLNSSNNNNNNNFNNS) the composition is skewed to low complexity. Over residues 148–158 (RPTFSSCSGNS) the composition is skewed to polar residues. 2 stretches are compositionally biased toward low complexity: residues 159–177 (NNTT…INGS) and 315–326 (SNHSNNNNNNNN). Positions 327 to 339 (NHHHHHHHHHQKR) are enriched in basic residues. The segment covering 348 to 378 (TNHLTPLPLLHKHTNNNNNINNNNNHNHNNI) has biased composition (low complexity). The span at 379–393 (LGSPNQLNRSQDFTS) shows a compositional bias: polar residues. Composition is skewed to low complexity over residues 394–408 (KNNN…NNKI), 415–426 (NKGSPNQNSSEN), 641–693 (NNNS…NNNI), 709–731 (HHQQ…QHQQ), and 770–793 (QQQQ…SNHN). The stretch at 738–789 (QQQLQIQYQQQQTHNNNLNQTQQLYYNHHHHQQQQQQQQQQQQHNNNNNNNN) forms a coiled coil. Polar residues-rich tracts occupy residues 794–818 (SVLT…PQHS) and 857–883 (SINS…QKNR). Composition is skewed to low complexity over residues 889-911 (ILNS…SNSI), 1001-1031 (QNYN…NNNF), and 1045-1063 (NINN…NNNN). A compositionally biased stretch (basic and acidic residues) spans 1064-1078 (KNDKNESEFESKEKL). Polar residues predominate over residues 1081–1095 (PFGSSIPNIVNNEQL). 3 stretches are compositionally biased toward low complexity: residues 1096-1116 (SPYS…PQWS), 1123-1137 (TSSS…TLIN), and 1166-1177 (NFINNNSNNNNN). Acidic residues predominate over residues 1179–1195 (EIDDDDEDGIDGIEGED). The segment at residues 1198 to 1261 (KKRMRKTTRP…NRRTKDKLKN (64 aa)) is a DNA-binding region (homeobox). The segment covering 1275-1294 (SSTSSTQTSTNSPSSQLSPL) has biased composition (low complexity). Residues 1297-1316 (NMNNNDQQSISTPSLILSQI) show a composition bias toward polar residues. The span at 1317–1334 (NNNQNNNQNNNNNNNTNN) shows a compositional bias: low complexity.

Its subcellular location is the nucleus. Putative transcription factor. This chain is Homeobox protein 13 (hbx13), found in Dictyostelium discoideum (Social amoeba).